The primary structure comprises 382 residues: Anhydro-N-acetylmuramic acid kinase (382 aa).

ATP is bound at residue 18 to 25 (GTSLDGVD).

Belongs to the anhydro-N-acetylmuramic acid kinase family.

It carries out the reaction 1,6-anhydro-N-acetyl-beta-muramate + ATP + H2O = N-acetyl-D-muramate 6-phosphate + ADP + H(+). The protein operates within amino-sugar metabolism; 1,6-anhydro-N-acetylmuramate degradation. Its pathway is cell wall biogenesis; peptidoglycan recycling. Catalyzes the specific phosphorylation of 1,6-anhydro-N-acetylmuramic acid (anhMurNAc) with the simultaneous cleavage of the 1,6-anhydro ring, generating MurNAc-6-P. Is required for the utilization of anhMurNAc either imported from the medium or derived from its own cell wall murein, and thus plays a role in cell wall recycling. This Ralstonia nicotianae (strain ATCC BAA-1114 / GMI1000) (Ralstonia solanacearum) protein is Anhydro-N-acetylmuramic acid kinase.